The chain runs to 214 residues: Ribonuclease S-2 (214 aa).

Positions 1–22 (MSKSQLTSVFFILLCALSPIYG) are cleaved as a signal peptide. Cys-38 and Cys-43 are oxidised to a cystine. Residue Asn-49 is glycosylated (N-linked (GlcNAc...) asparagine). The active-site Proton donor is the His-53. Position 53 (His-53) interacts with RNA. N-linked (GlcNAc...) asparagine glycosylation is present at Asn-59. Cys-67 and Cys-116 are joined by a disulfide. RNA-binding positions include 91–92 (DL), Lys-94, and Phe-105. Glu-109 is a catalytic residue. Position 112-113 (112-113 (KH)) interacts with RNA. The active-site Proton acceptor is the His-113. N-linked (GlcNAc...) asparagine glycosylation occurs at Asn-160. Cystine bridges form between Cys-175–Cys-204 and Cys-187–Cys-198.

Belongs to the RNase T2 family.

It is found in the secreted. It localises to the extracellular space. It catalyses the reaction a ribonucleotidyl-ribonucleotide-RNA + H2O = a 3'-end 3'-phospho-ribonucleotide-RNA + a 5'-end dephospho-ribonucleoside-RNA + H(+). Functionally, self-incompatibility (SI) is the inherited ability of a flowering plant to prevent self-fertilization by discriminating between self and non-self pollen during pollination. In many species of the Solanaceae, self-incompatibility is controlled by the single, multiallelic locus S. This stylar glycoprotein is associated with expression of self-incompatibility in potato. This chain is Ribonuclease S-2 (S-2), found in Nicotiana alata (Winged tobacco).